Reading from the N-terminus, the 385-residue chain is UPF0496 protein At3g28290 (385 aa).

Residues 138 to 214 (KDKENDVGKK…IEMEISSRKK (77 aa)) are a coiled coil. A run of 2 helical transmembrane segments spans residues 217 to 237 (IISN…SMVL) and 242 to 262 (VGAG…IGWV). Positions 267 to 294 (ILENKIQAREKQEEALKKAHRIANEMDK) form a coiled coil.

It belongs to the UPF0496 family. As to expression, widely expressed.

It localises to the membrane. The protein is UPF0496 protein At3g28290 of Arabidopsis thaliana (Mouse-ear cress).